The following is a 347-amino-acid chain: NADH-ubiquinone oxidoreductase chain 2 (347 aa).

9 helical membrane passes run 3–23, 59–79, 93–115, 150–170, 178–198, 199–219, 242–262, 274–294, and 326–346; these read PLAL…TMMS, YFMT…INLM, VASN…HFWV, NTNL…WGGL, ILAY…PFNP, TLTL…FMIL, IMLM…GFMP, NSII…YFYM, and LPTL…ISML.

The protein belongs to the complex I subunit 2 family. Core subunit of respiratory chain NADH dehydrogenase (Complex I) which is composed of 45 different subunits. Interacts with TMEM242.

It is found in the mitochondrion inner membrane. The enzyme catalyses a ubiquinone + NADH + 5 H(+)(in) = a ubiquinol + NAD(+) + 4 H(+)(out). Its function is as follows. Core subunit of the mitochondrial membrane respiratory chain NADH dehydrogenase (Complex I) which catalyzes electron transfer from NADH through the respiratory chain, using ubiquinone as an electron acceptor. Essential for the catalytic activity and assembly of complex I. The sequence is that of NADH-ubiquinone oxidoreductase chain 2 from Loxodonta africana (African elephant).